The chain runs to 1311 residues: Ubiquitin carboxyl-terminal hydrolase 36 (1311 aa).

Low complexity-rich tracts occupy residues 120–134 (AAAA…SAGS) and 156–174 (STPT…SSSS). The disordered stretch occupies residues 120-189 (AAAATNNGNS…NPNELPKPKR (70 aa)). Positions 212 to 533 (AGMINVGNTC…NSYIMFYELD (322 aa)) constitute a USP domain. C221 (nucleophile) is an active-site residue. H492 serves as the catalytic Proton acceptor. The tract at residues 546–575 (NGLRQLSNGHHHHQQQQQQHQQQQQQQPTV) is disordered. Low complexity predominate over residues 560–572 (QQQQQHQQQQQQQ). S581 bears the Phosphoserine mark. 3 disordered regions span residues 587–620 (TRFI…GHSQ), 640–1095 (KFQE…GCLN), and 1136–1311 (DHGD…QQQS). 3 stretches are compositionally biased toward low complexity: residues 605-616 (TTTTTATNNTTN), 660-716 (APAV…QQQQ), and 759-774 (TLTL…STPT). A Phosphothreonine modification is found at T767. A phosphoserine mark is found at S787 and S789. A compositionally biased stretch (low complexity) spans 795-826 (SSGTPSSSTPTTTTTAAAAAASSPMQATAAAT). The span at 836-853 (ARKRSLPDHHHHHPHHHV) shows a compositional bias: basic residues. Polar residues predominate over residues 869-879 (PATNFNSSSSK). Residues 880–889 (QKTDAIDEIF) are compositionally biased toward basic and acidic residues. Residues 896-905 (NKKRINNKNQ) show a composition bias toward basic residues. Positions 910–920 (GDEEEDDEETL) are enriched in acidic residues. Composition is skewed to low complexity over residues 925–942 (NNSS…PTTN) and 950–979 (VSSS…STSA). Residues 980 to 989 (PPSPKTPPSP) show a composition bias toward pro residues. Residue S982 is modified to Phosphoserine. T985 bears the Phosphothreonine mark. A Phosphoserine modification is found at S988. A compositionally biased stretch (acidic residues) spans 1006–1020 (DDDDDEEEEDEDDEE). A compositionally biased stretch (low complexity) spans 1037–1050 (PFSSQQKPTPSPST). At S1047 the chain carries Phosphoserine. T1050 carries the post-translational modification Phosphothreonine. A compositionally biased stretch (polar residues) spans 1060–1081 (FNGTSSSTPHVGNGYQSEPSTP). Low complexity-rich tracts occupy residues 1154-1176 (VVTT…TADA) and 1204-1221 (TANG…PGYN). Over residues 1246–1255 (QHASSSYRSN) the composition is skewed to polar residues. Positions 1267–1276 (GGNGGGGSGG) are enriched in gly residues.

Belongs to the peptidase C19 family. Interacts with atms/PAF1, but not with CycT.

Its subcellular location is the nucleus. It localises to the nucleolus. The enzyme catalyses Thiol-dependent hydrolysis of ester, thioester, amide, peptide and isopeptide bonds formed by the C-terminal Gly of ubiquitin (a 76-residue protein attached to proteins as an intracellular targeting signal).. Functionally, required for maintaining multiple types of adult stem cells, including male and female germline, epithelial follicle cell and intestinal stem cells. May function as a transcriptional repressor by continually deubiquiting histone H2B at the promoters of genes critical for cellular differentiation, thereby preventing histone H3 'Lys-4' trimethylation (H3K4). Controls selective autophagy activation by ubiquitinated proteins. In Drosophila willistoni (Fruit fly), this protein is Ubiquitin carboxyl-terminal hydrolase 36 (Usp36).